The primary structure comprises 526 residues: ATP-dependent RNA helicase DBP3 (526 aa).

A compositionally biased stretch (basic and acidic residues) spans M1–D33. A disordered region spans residues M1–S86. A compositionally biased stretch (basic residues) spans K34 to Y65. Positions A69–S86 are enriched in polar residues. Residues L118 to S144 carry the Q motif motif. Positions W147–V318 constitute a Helicase ATP-binding domain. Residue A160–T167 participates in ATP binding. The short motif at D265–D268 is the DEAD box element. The Helicase C-terminal domain maps to Q334–G496.

Belongs to the DEAD box helicase family. DDX5/DBP2 subfamily.

The protein localises to the nucleus. It is found in the nucleolus. The enzyme catalyses ATP + H2O = ADP + phosphate + H(+). Its function is as follows. ATP-dependent RNA helicase required for 60S ribosomal subunit synthesis. Involved in efficient pre-rRNA processing, predominantly at site A3, which is necessary for the normal formation of 25S and 5.8S rRNAs. In Scheffersomyces stipitis (strain ATCC 58785 / CBS 6054 / NBRC 10063 / NRRL Y-11545) (Yeast), this protein is ATP-dependent RNA helicase DBP3 (DBP3).